The sequence spans 171 residues: Regulatory protein RecX (171 aa).

This sequence belongs to the RecX family.

The protein resides in the cytoplasm. In terms of biological role, modulates RecA activity. The sequence is that of Regulatory protein RecX from Mycobacterium leprae (strain Br4923).